We begin with the raw amino-acid sequence, 31 residues long: Cyclotide vpub-A (31 aa).

A cross-link (cyclopeptide (Gly-Asn)) is located at residues 1–31 (GVIPCGESCVFIPCISAVIGCSCKSKVCYRN). Intrachain disulfides connect Cys-5-Cys-21, Cys-9-Cys-23, and Cys-14-Cys-28.

It belongs to the cyclotide family. Bracelet subfamily. In terms of processing, this is a cyclic peptide.

Functionally, probably participates in a plant defense mechanism. This chain is Cyclotide vpub-A, found in Viola pubescens (Downy yellow violet).